A 304-amino-acid chain; its full sequence is Quinolinate synthase (304 aa).

H23 and S40 together coordinate iminosuccinate. Residue C86 participates in [4Fe-4S] cluster binding. Iminosuccinate is bound by residues 112–114 (YVN) and S129. C173 is a binding site for [4Fe-4S] cluster. Iminosuccinate-binding positions include 199–201 (HPE) and T216. C260 contacts [4Fe-4S] cluster.

This sequence belongs to the quinolinate synthase family. Type 2 subfamily. [4Fe-4S] cluster is required as a cofactor.

It localises to the cytoplasm. The enzyme catalyses iminosuccinate + dihydroxyacetone phosphate = quinolinate + phosphate + 2 H2O + H(+). It participates in cofactor biosynthesis; NAD(+) biosynthesis; quinolinate from iminoaspartate: step 1/1. In terms of biological role, catalyzes the condensation of iminoaspartate with dihydroxyacetone phosphate to form quinolinate. The polypeptide is Quinolinate synthase (Methanothermobacter thermautotrophicus (strain ATCC 29096 / DSM 1053 / JCM 10044 / NBRC 100330 / Delta H) (Methanobacterium thermoautotrophicum)).